The sequence spans 148 residues: UPF0178 protein Mlg_1612 (148 aa).

It belongs to the UPF0178 family.

The protein is UPF0178 protein Mlg_1612 of Alkalilimnicola ehrlichii (strain ATCC BAA-1101 / DSM 17681 / MLHE-1).